The primary structure comprises 372 residues: Putative glutamate--cysteine ligase 2 (372 aa).

Belongs to the glutamate--cysteine ligase type 2 family. YbdK subfamily.

The catalysed reaction is L-cysteine + L-glutamate + ATP = gamma-L-glutamyl-L-cysteine + ADP + phosphate + H(+). ATP-dependent carboxylate-amine ligase which exhibits weak glutamate--cysteine ligase activity. The sequence is that of Putative glutamate--cysteine ligase 2 from Gloeobacter violaceus (strain ATCC 29082 / PCC 7421).